The chain runs to 149 residues: Calmodulin (149 aa).

N-acetylalanine is present on alanine 2. 4 EF-hand domains span residues 8 to 43 (EQIAEFKEAFSLFDKDGDGTITTKELGTVMRSLGQN), 44 to 79 (PTEAELQDMINEVDADGNGTIDFPEFLTMMARKMKD), 81 to 116 (DSEEEIREAFRVFDKDGNGFISAAELRHVMTNLGEK), and 117 to 149 (LTDEEVDEMIREADIDGDGQVNYEEFVTMMTTK). Residues aspartate 21, aspartate 23, aspartate 25, threonine 27, glutamate 32, aspartate 57, aspartate 59, asparagine 61, threonine 63, glutamate 68, aspartate 94, aspartate 96, asparagine 98, and glutamate 105 each coordinate Ca(2+). The residue at position 116 (lysine 116) is an N6,N6,N6-trimethyllysine. Residues aspartate 130, aspartate 132, aspartate 134, glutamine 136, and glutamate 141 each contribute to the Ca(2+) site.

Belongs to the calmodulin family. Interacts (in the presence of Ca(2+)) with pde-1, madf-3, rpl-7A, tax-6, efk-1, npp-1, obr-4, sos-1, akt-1, unc-13, tag-196, ugt-48, nmy-2, F27D4.4, ddx-23, efa-6 and R11H6.4.

Calmodulin mediates the control of a large number of enzymes, ion channels and other proteins by Ca(2+). Among the enzymes to be stimulated by the calmodulin-Ca(2+) complex are a number of protein kinases and phosphatases. The polypeptide is Calmodulin (cmd-1) (Caenorhabditis elegans).